Reading from the N-terminus, the 389-residue chain is Equilibrative nucleotide transporter 8 (389 aa).

10 consecutive transmembrane segments (helical) span residues 19-39 (VAYV…NALI), 57-77 (TFTV…MTWN), 87-107 (NLGF…DWVW), 119-139 (LMVG…GSLI), 150-170 (MQAI…LRIA), 187-207 (HSYF…CNVL), 238-258 (WPAS…PGFI), 266-286 (LLQS…DFVG), 331-351 (VVVL…VLMI), and 367-387 (IFMV…GWLW).

Belongs to the SLC29A/ENT transporter (TC 2.A.57) family. As to expression, expressed in stems, flowers and siliques.

The protein localises to the cell membrane. Its function is as follows. May be involved in nucleoside transport. This Arabidopsis thaliana (Mouse-ear cress) protein is Equilibrative nucleotide transporter 8 (ETN8).